A 432-amino-acid chain; its full sequence is Amino-acid acetyltransferase (432 aa).

Residues 286–425 form the N-acetyltransferase domain; it reads EQLREAGIED…ASLYNFQRNS (140 aa).

It belongs to the acetyltransferase family. ArgA subfamily.

Its subcellular location is the cytoplasm. It catalyses the reaction L-glutamate + acetyl-CoA = N-acetyl-L-glutamate + CoA + H(+). The protein operates within amino-acid biosynthesis; L-arginine biosynthesis; N(2)-acetyl-L-ornithine from L-glutamate: step 1/4. This is Amino-acid acetyltransferase from Pseudomonas aeruginosa (strain LESB58).